Consider the following 316-residue polypeptide: Very-long-chain 3-oxooacyl-coA reductase let-767 (316 aa).

NADP(+) is bound by residues 52-80 (ITGA…VSRT) and aspartate 106. Serine 189 contributes to the substrate binding site. Catalysis depends on tyrosine 202, which acts as the Proton acceptor. Lysine 206 is an NADP(+) binding site.

Belongs to the short-chain dehydrogenases/reductases (SDR) family. 17-beta-HSD 3 subfamily.

The catalysed reaction is a very-long-chain (3R)-3-hydroxyacyl-CoA + NADP(+) = a very-long-chain 3-oxoacyl-CoA + NADPH + H(+). Its pathway is lipid metabolism; fatty acid biosynthesis. In terms of biological role, required for branched chain fatty acid synthesis. Catalyzes the reduction of the 3-ketoacyl-CoA intermediate that is formed in each cycle of fatty acid elongation. Very long-chain fatty acids (VLCFAs) serve as precursors for ceramide and sphingolipids. May also be required for sterol hormone production. In Caenorhabditis briggsae, this protein is Very-long-chain 3-oxooacyl-coA reductase let-767.